The sequence spans 1029 residues: Beta-galactosidase 2 (1029 aa).

Substrate-binding residues include asparagine 104 and aspartate 203. Aspartate 203 serves as a coordination point for Na(+). Residues glutamate 418, histidine 420, and glutamate 463 each coordinate Mg(2+). Substrate is bound by residues glutamate 463 and 539–542 (EYAH). Glutamate 463 acts as the Proton donor in catalysis. Glutamate 539 acts as the Nucleophile in catalysis. Asparagine 599 is a binding site for Mg(2+). Na(+) is bound by residues phenylalanine 603 and asparagine 606. Substrate contacts are provided by asparagine 606 and tryptophan 1004.

It belongs to the glycosyl hydrolase 2 family. Homotetramer. Mg(2+) is required as a cofactor. It depends on Na(+) as a cofactor.

It catalyses the reaction Hydrolysis of terminal non-reducing beta-D-galactose residues in beta-D-galactosides.. The polypeptide is Beta-galactosidase 2 (Enterobacter cloacae).